The primary structure comprises 434 residues: Gamma-glutamyl phosphate reductase (434 aa).

This sequence belongs to the gamma-glutamyl phosphate reductase family.

The protein resides in the cytoplasm. It catalyses the reaction L-glutamate 5-semialdehyde + phosphate + NADP(+) = L-glutamyl 5-phosphate + NADPH + H(+). It functions in the pathway amino-acid biosynthesis; L-proline biosynthesis; L-glutamate 5-semialdehyde from L-glutamate: step 2/2. Catalyzes the NADPH-dependent reduction of L-glutamate 5-phosphate into L-glutamate 5-semialdehyde and phosphate. The product spontaneously undergoes cyclization to form 1-pyrroline-5-carboxylate. This is Gamma-glutamyl phosphate reductase from Trichormus variabilis (strain ATCC 29413 / PCC 7937) (Anabaena variabilis).